The chain runs to 184 residues: ADP-ribosylation factor-like protein 2 (184 aa).

A lipid anchor (N-myristoyl glycine) is attached at Gly-2. GTP-binding positions include 23-30 (GLDNAGKT), 66-70 (DVGGQ), Gly-68, and 125-128 (NKSD).

Belongs to the small GTPase superfamily. Arf family. As to expression, in the embryo, strongly expressed in migrating hypodermal cells. Shortly before the beginning of elongation, expressed in many developing neurons where it persists throughout adulthood. In the larva, highly expressed in migrating hypodermal cells and the uterus. Also expressed in vulva, spermatheca, sheath cells, distal tips cells and proctoderm of the male tail.

It localises to the cytoplasm. The protein resides in the cell membrane. The protein localises to the cytoskeleton. It is found in the microtubule organizing center. Its subcellular location is the centrosome. GTP-binding protein that functions in embryogenesis, cytokinesis, germline development and microtubulule cytoskeleton dynamics. This is ADP-ribosylation factor-like protein 2 (evl-20) from Caenorhabditis elegans.